Reading from the N-terminus, the 371-residue chain is Deoxyguanosinetriphosphate triphosphohydrolase-like protein (371 aa).

In terms of domain architecture, HD spans Arg62–Asn200.

The protein belongs to the dGTPase family. Type 2 subfamily.

This Pelagibacter ubique (strain HTCC1062) protein is Deoxyguanosinetriphosphate triphosphohydrolase-like protein.